The sequence spans 359 residues: Membrane-bound lytic murein transglycosylase C (359 aa).

An N-terminal signal peptide occupies residues 1–16 (MKKYLALALIAPLLIS). Residue Cys-17 is the site of N-palmitoyl cysteine attachment. The S-diacylglycerol cysteine moiety is linked to residue Cys-17.

This sequence belongs to the transglycosylase Slt family.

It localises to the cell outer membrane. It catalyses the reaction Exolytic cleavage of the (1-&gt;4)-beta-glycosidic linkage between N-acetylmuramic acid (MurNAc) and N-acetylglucosamine (GlcNAc) residues in peptidoglycan, from either the reducing or the non-reducing ends of the peptidoglycan chains, with concomitant formation of a 1,6-anhydrobond in the MurNAc residue.. In terms of biological role, murein-degrading enzyme. May play a role in recycling of muropeptides during cell elongation and/or cell division. In Escherichia coli O157:H7, this protein is Membrane-bound lytic murein transglycosylase C.